We begin with the raw amino-acid sequence, 50 residues long: uncharacterized protein (50 aa).

Residues L10–I29 form a helical membrane-spanning segment.

It localises to the plastid. The protein localises to the chloroplast membrane. This is an uncharacterized protein from Marchantia polymorpha (Common liverwort).